The following is a 179-amino-acid chain: Large ribosomal subunit protein uL5 (179 aa).

It belongs to the universal ribosomal protein uL5 family. Part of the 50S ribosomal subunit; part of the 5S rRNA/L5/L18/L25 subcomplex. Contacts the 5S rRNA and the P site tRNA. Forms a bridge to the 30S subunit in the 70S ribosome.

Functionally, this is one of the proteins that bind and probably mediate the attachment of the 5S RNA into the large ribosomal subunit, where it forms part of the central protuberance. In the 70S ribosome it contacts protein S13 of the 30S subunit (bridge B1b), connecting the 2 subunits; this bridge is implicated in subunit movement. Contacts the P site tRNA; the 5S rRNA and some of its associated proteins might help stabilize positioning of ribosome-bound tRNAs. This chain is Large ribosomal subunit protein uL5, found in Bacillus cereus (strain Q1).